Reading from the N-terminus, the 277-residue chain is RsbT co-antagonist protein RsbRB (277 aa).

In terms of domain architecture, STAS spans 165-276; sequence SSPVITLSKS…TNLAQALNYH (112 aa). Threonine 186 is modified (phosphothreonine).

In terms of assembly, interacts with RsbRA and RsbS in the stressosome. The stressosome probably also contains RsbRC and RsbRD. Post-translationally, phosphorylated by RsbT.

One of 4 functionally non-identical RsbR paralogs, it functions in the environmental signaling branch of the general stress response. In terms of biological role, negative regulator of sigma-B activity. Non-phosphorylated RsbS binds to RsbT, preventing its association with RsbU. Requires any one of RsbRA, RsbRB, RsbRC or RsbRD to sequester RsbT. When RsbS and the RsbR paralog(s) are phosphorylated, they release RsbT, which can then bind and activate RsbU. This Bacillus subtilis (strain 168) protein is RsbT co-antagonist protein RsbRB (rsbRB).